Here is a 330-residue protein sequence, read N- to C-terminus: uncharacterized protein (330 aa).

10 helical membrane-spanning segments follow: residues 15–35 (LTLIAPFFLWGTAMVAMKGVL), 41–61 (FFVATVRLIPAGILVLLWAMG), 72–92 (GWGWIILFALVDGTLFQGFLA), 102–122 (LGSVIIDSQPIAVALLSSWLF), 125–145 (VIGGIGWLGLLLGVGGISLIG), 175–195 (LWMLLASLSMAVGTVLIPFVS), 201–221 (VVATGWHMIIGGLPLLAIALV), 238–258 (LAYATVFGSAIAYGIFFYLAS), 264–284 (SLSSLTFLTPIFALSFSNLIL), and 286–306 (EQLSSLQWLGVAFTLVSIYLI). 2 consecutive EamA domains span residues 22 to 146 (FLWG…LIGL) and 182 to 308 (LSMA…LINQ).

The protein belongs to the EamA transporter family.

It localises to the cell membrane. This is an uncharacterized protein from Synechocystis sp. (strain ATCC 27184 / PCC 6803 / Kazusa).